The following is a 97-amino-acid chain: Late transcription unit B protein (97 aa).

A disordered region spans residues 24–45 (SIEGETKKEHKHHYSTASKEKE).

This Chlamydia trachomatis serovar D (strain ATCC VR-885 / DSM 19411 / UW-3/Cx) protein is Late transcription unit B protein (ltuB).